The chain runs to 224 residues: Small ribosomal subunit protein uS2 (224 aa).

The segment covering 1-14 (MAEAKPAPEKEAAV) has biased composition (basic and acidic residues). Residues 1–32 (MAEAKPAPEKEAAVKTESVPVADDEAASAKEG) are disordered.

It belongs to the universal ribosomal protein uS2 family.

This chain is Small ribosomal subunit protein uS2, found in Methanosarcina mazei (strain ATCC BAA-159 / DSM 3647 / Goe1 / Go1 / JCM 11833 / OCM 88) (Methanosarcina frisia).